A 967-amino-acid chain; its full sequence is A disintegrin and metalloproteinase with thrombospondin motifs 1 (967 aa).

2 disordered regions span residues methionine 1–serine 27 and glycine 192–lysine 250. The N-terminal stretch at methionine 1–alanine 49 is a signal peptide. The propeptide occupies leucine 50–arginine 252. The Cysteine switch motif lies at glycine 196 to aspartate 203. Cysteine 198 contributes to the Zn(2+) binding site. Residues aspartate 203–glutamate 212 are compositionally biased toward basic and acidic residues. Over residues threonine 213 to glycine 226 the composition is skewed to acidic residues. Residues arginine 258–proline 467 form the Peptidase M12B domain. Glutamate 261, aspartate 344, and aspartate 351 together coordinate Ca(2+). 4 cysteine pairs are disulfide-bonded: cysteine 333-cysteine 385, cysteine 362-cysteine 367, cysteine 379-cysteine 462, and cysteine 417-cysteine 446. Histidine 401 serves as a coordination point for Zn(2+). Residue glutamate 402 is part of the active site. The Zn(2+) site is built by histidine 405 and histidine 411. The Ca(2+) site is built by cysteine 462 and aspartate 465. Residues aspartate 476–histidine 559 enclose the Disintegrin domain. 4 disulfide bridges follow: cysteine 488-cysteine 511, cysteine 499-cysteine 521, cysteine 506-cysteine 540, and cysteine 534-cysteine 545. The N-linked (GlcNAc...) asparagine glycan is linked to asparagine 547. The TSP type-1 1 domain maps to histidine 559–proline 614. 3 cysteine pairs are disulfide-bonded: cysteine 571–cysteine 608, cysteine 575–cysteine 613, and cysteine 586–cysteine 598. N-linked (GlcNAc...) asparagine glycans are attached at residues asparagine 720 and asparagine 764. A spacer region spans residues lysine 725–phenylalanine 849. TSP type-1 domains lie at threonine 854–alanine 905 and proline 908–serine 967.

Requires Zn(2+) as cofactor. In terms of processing, the precursor is cleaved by a furin endopeptidase. Post-translationally, glycosylated. Can be O-fucosylated by POFUT2 on a serine or a threonine residue found within the consensus sequence C1-X(2)-(S/T)-C2-G of the TSP type-1 repeat domains where C1 and C2 are the first and second cysteine residue of the repeat, respectively. Fucosylated repeats can then be further glycosylated by the addition of a beta-1,3-glucose residue by the glucosyltransferase, B3GALTL. Fucosylation mediates the efficient secretion of ADAMTS family members. Can also be C-glycosylated with one or two mannose molecules on tryptophan residues within the consensus sequence W-X-X-W of the TPRs, and N-glycosylated. These other glycosylations can also facilitate secretion.

The protein localises to the secreted. Its subcellular location is the extracellular space. It localises to the extracellular matrix. Functionally, metalloprotease which cleaves aggrecan, a cartilage proteoglycan, at the '1938-Glu-|-Leu-1939' site (within the chondroitin sulfate attachment domain), and may be involved in its turnover. Also cleaves COMP. Has angiogenic inhibitor activity. May play a critical role in follicular rupture. The polypeptide is A disintegrin and metalloproteinase with thrombospondin motifs 1 (ADAMTS1) (Homo sapiens (Human)).